We begin with the raw amino-acid sequence, 159 residues long: Transcription elongation factor A protein-like 1 (159 aa).

Residues methionine 1–glutamate 99 are disordered. Residues lysine 17 to leucine 34 are compositionally biased toward basic and acidic residues. Positions glutamine 37–leucine 54 are enriched in acidic residues. Residues serine 64–glutamate 80 are compositionally biased toward basic and acidic residues.

Belongs to the TFS-II family. TFA subfamily.

The protein localises to the nucleus. Functionally, may be involved in transcriptional regulation. Modulates various viral and cellular promoters in a promoter context-dependent manner. Does not bind DNA directly. This Ateles geoffroyi (Black-handed spider monkey) protein is Transcription elongation factor A protein-like 1.